A 2474-amino-acid chain; its full sequence is Polyprotein P1234 (2474 aa).

The region spanning glutamate 28–histidine 259 is the Alphavirus-like MT domain. Histidine 37 acts as the For mRNA-capping enzyme nsP1 activity in catalysis. Zn(2+)-binding residues include histidine 79, glutamate 129, cysteine 134, and cysteine 141. The interval glycine 295–phenylalanine 450 is membrane-binding and oligomerization. 2 S-palmitoyl cysteine; by host lipidation sites follow: cysteine 417 and cysteine 419. Residues proline 482–glutamate 502 form a disordered region. A (+)RNA virus helicase ATP-binding domain is found at aspartate 690 to lysine 842. Glycine 721–serine 728 contacts a ribonucleoside 5'-triphosphate. A (+)RNA virus helicase C-terminal domain is found at serine 843 to serine 991. The region spanning aspartate 1004–glutamine 1327 is the Peptidase C9 domain. A nucleolus localization signal region spans residues threonine 1005 to threonine 1024. Cysteine 1013 serves as the catalytic For cysteine protease nsP2 activity. The Nuclear export signal signature appears at threonine 1058–serine 1067. Histidine 1083 acts as the For cysteine protease nsP2 activity in catalysis. Residues proline 1182–valine 1186 carry the Nuclear localization signal motif. The Macro domain occupies alanine 1334–threonine 1493. Aspartate 1343, asparagine 1357, glycine 1365, glycine 1445, valine 1446, and tyrosine 1447 together coordinate ADP-D-ribose. Cysteine 1595, cysteine 1597, cysteine 1620, and cysteine 1638 together coordinate Zn(2+). A disordered region spans residues arginine 1651–serine 1672. The HVD stretch occupies residues proline 1659–arginine 1857. Polar residues predominate over residues serine 1660–serine 1672. Interaction with host CD2AP regions lie at residues valine 1726 to arginine 1739 and proline 1756 to leucine 1767. An interaction with host FHL1 region spans residues valine 1745–glutamate 1793. Residues phenylalanine 1812–phenylalanine 1815 carry the FGDF; binding to host G3BP1 motif. The interval isoleucine 1820–leucine 1828 is interaction with host CD2AP. The FGDF; binding to host G3BP1 motif lies at phenylalanine 1830–phenylalanine 1833. A RdRp catalytic domain is found at aspartate 2228 to alanine 2343.

As to quaternary structure, homododecamer. The enzyme forms a membrane-associated dodecameric ring with a central channel for the exchange of between the viral replication factories and the host cytoplasm. Interacts with non-structural protein 3. Interacts with RNA-directed RNA polymerase nsP4. Interacts with protease nsP2. Interacts with itself. Interacts with host STING1; this interaction results in inhibition of cGAS-STING signaling and increased levels of palmitoylation and protein stabilization of nsP1. Interacts with host TMEM45B; this interaction leads to viral replication inhibition. In terms of assembly, interacts with mRNA-capping enzyme nsP1. Interacts (via C-terminus) with host G3BP1; this interaction inhibits the formation of host stress granules on viral mRNAs and the nsp3-G3BP1 complexes bind viral RNAs and probably orchestrate the assembly of viral replication complexes. Interacts (via C-terminus) with host G3BP2; this interaction inhibits the formation of host stress granules on viral mRNAs and the nsp3-G3BP2 complexes bind viral RNAs and probably orchestrate the assembly of viral replication complexes. Interacts (via C-terminus) with host NAP1L1. Interacts (via C-terminus) with host NAP1L4. Interacts (via C-terminus) with host DHX9; this interaction allows the recruitment of DHX9 to the plasma membrane, where it associates with viral replication complexes and may play a role in the translation-to-replication switch. Interacts (via C-terminus) with host FHL1 (via LIM domain 1); this interaction is required for viral RNA replication. Interacts (via C-terminus) with host CD2AP; this interaction plays a role in initiation of viral replication. Interacts (via C-terminus) with host SH3KBP1; this interaction plays a role in initiation of viral replication. Interacts with mRNA-capping enzyme nsP1. Interacts with protease nsP2. interacts with itself. Interacts with host TMEM45B; this interaction leads to viral replication inhibition. As to quaternary structure, interacts with RNA-directed RNA polymerase nsP4. Interacts with mRNA-capping enzyme nsP1. Interacts with KPNA1/karyopherin-alpha1; this interaction probably allows the active transport of protease nsP2 into the host nucleus. Mg(2+) serves as cofactor. The cofactor is Mn(2+). In terms of processing, specific enzymatic cleavages in vivo yield mature proteins. The processing of the polyprotein is temporally regulated. In early stages (1.7 hpi), P1234 is first cleaved in trans through its nsP2 protease activity, releasing P123 and nsP4, which associate to form the early replication complex. At the same time, P1234 is also cut at the nsP1/nsP2 site early in infection but with lower efficiency. After replication of the viral minus-strand RNAs (4 hpi), the polyproteins are cut at the nsP1/nsP2 and nsP2/nsP3 sites very efficiently, preventing accumulation of P123 and P1234 and allowing the formation of the late replication complex. NsP3/nsP4 site is not cleaved anymore and P34 is produced rather than nsP4. Post-translationally, specific enzymatic cleavages in vivo yield mature proteins. The processing of the polyprotein is temporally regulated. In early stages (1.7 hpi), P123 is cleaved at the nsP1/nsP2 site with low efficiency. After replication of the viral minus-strand RNAs (4 hpi), the polyproteins are cut at the nsP1/nsP2 and nsP2/nsP3 sites very efficiently, preventing accumulation of P123 and allowing the formation of the late replication complex. Palmitoylated by host palmitoyltransferases ZDHHC2 and ZDHHC19. Palmitoylation is increased by the interacton with host STING1. In terms of processing, phosphorylated by host on serines and threonines. Post-translationally, ubiquitinated; targets the protein for rapid degradation via the ubiquitin system. Nsp4 is present in extremely low quantities due to low frequency of translation through the amber stop-codon and the degradation by the ubiquitin pathway.

The protein resides in the host cytoplasmic vesicle membrane. It is found in the host cell membrane. It localises to the host cell projection. Its subcellular location is the host filopodium. The protein localises to the host nucleus. The protein resides in the host cytoplasm. The enzyme catalyses GTP + S-adenosyl-L-methionine = N(7)-methyl-GTP + S-adenosyl-L-homocysteine. It carries out the reaction N(7)-methyl-GTP + L-histidyl-[protein] = N(tele)-(N(7)-methylguanosine 5'-phospho)-L-histidyl-[protein] + diphosphate. The catalysed reaction is N(tele)-(N(7)-methylguanosine 5'-phospho)-L-histidyl-[protein] + a 5'-end diphospho-(purine-ribonucleoside) in mRNA + H(+) = a 5'-end (N(7)-methyl 5'-triphosphoguanosine)-(purine-ribonucleoside) in mRNA + L-histidyl-[protein]. It catalyses the reaction a 5'-end triphospho-ribonucleoside in mRNA + H2O = a 5'-end diphospho-ribonucleoside in mRNA + phosphate + H(+). The enzyme catalyses a ribonucleoside 5'-triphosphate + H2O = a ribonucleoside 5'-diphosphate + phosphate + H(+). It carries out the reaction ATP + H2O = ADP + phosphate + H(+). The catalysed reaction is RNA(n) + a ribonucleoside 5'-triphosphate = RNA(n+1) + diphosphate. It catalyses the reaction 4-O-(ADP-D-ribosyl)-L-aspartyl-[protein] + H2O = L-aspartyl-[protein] + ADP-D-ribose + H(+). The enzyme catalyses 5-O-(ADP-D-ribosyl)-L-glutamyl-[protein] + H2O = L-glutamyl-[protein] + ADP-D-ribose + H(+). It carries out the reaction RNA(n) + ATP = RNA(n)-3'-adenine ribonucleotide + diphosphate. The catalysed reaction is ADP-alpha-D-ribose 1''-phosphate + H2O = ADP-D-ribose + phosphate. Its function is as follows. Inactive precursor of the viral replicase, which is activated by cleavages carried out by the viral protease nsP2. In terms of biological role, the early replication complex formed by the polyprotein P123 and nsP4 synthesizes minus-strand RNAs. As soon P123 is cleaved into mature proteins, the plus-strand RNAs synthesis begins. Cytoplasmic capping enzyme that catalyzes two virus-specific reactions: methyltransferase and guanylyltransferase. mRNA-capping is necessary since all viral RNAs are synthesized in the cytoplasm, and host capping enzymes are restricted to the nucleus. The enzymatic reaction involves a covalent link between 7-methyl-GMP and nsP1, whereas eukaryotic capping enzymes form a covalent complex only with GMP. nsP1 capping consists in the following reactions: GTP is first methylated into 7-methyl-GMP and then is covalently linked to nsP1 to form the m7GMp-nsP1 complex from which 7-methyl-GMP complex is transferred to the mRNA to create the cap structure. NsP1 is also needed for the initiation of the minus-strand RNAs synthesis. At the initiation of virus replication, mediates the assembly of the viral replication complex made of the non-structural proteins, the association of this complex with the inner face of the plasma membrane and the formation of membranous spherules that serve as replication complex factories. Forms the neck of these spherules with a central channel for mediating communication and the passage of RNA, nucleotides, and small proteins between the viral replication complex and the host cytoplasm. Palmitoylated nsP1 is remodeling host cell cytoskeleton, and induces filopodium-like structure formation at the surface of the host cell. Functionally, multifunctional protein whose N-terminus is part of the RNA polymerase complex and displays NTPase, RNA triphosphatase and helicase activities. NTPase and RNA triphosphatase are involved in viral RNA capping and helicase keeps a check on the dsRNA replication intermediates. The C-terminus harbors a protease that specifically cleaves the polyproteins and releases the mature proteins. Required for the shutoff of minus-strand RNAs synthesis. Specifically inhibits the host IFN response by promoting the nuclear export of host STAT1. Also inhibits host transcription by inducing the rapid proteasome-dependent degradation of POLR2A, a catalytic subunit of the RNAPII complex. The resulting inhibition of cellular protein synthesis serves to ensure maximal viral gene expression and to evade host immune response. Its function is as follows. Seems to be essential for minus-strand RNAs and subgenomic 26S mRNAs synthesis. Displays mono-ADP-ribosylhydrolase activity. ADP-ribosylation is a post-translational modification that controls various processes of the host cell and the virus probably needs to revert it for optimal viral replication. Binds proteins of G3BP family and sequesters them into the viral RNA replication complexes thereby inhibiting the formation of host stress granules on viral mRNAs. The nsp3-G3BP complexes bind viral RNAs and probably orchestrate the assembly of viral replication complexes, thanks to the ability of G3BP family members to self-assemble and bind DNA. In terms of biological role, RNA dependent RNA polymerase. Replicates genomic and antigenomic RNA by recognizing replications specific signals. The early replication complex formed by the polyprotein P123 and nsP4 synthesizes minus-strand RNAs. The late replication complex composed of fully processed nsP1-nsP4 is responsible for the production of genomic and subgenomic plus-strand RNAs. This chain is Polyprotein P1234, found in Chikungunya virus (strain S27-African prototype) (CHIKV).